The primary structure comprises 217 residues: UPF0193 protein EVG1 (217 aa).

The protein belongs to the UPF0193 (EVG1) family.

This chain is UPF0193 protein EVG1 (C22orf23), found in Homo sapiens (Human).